A 354-amino-acid polypeptide reads, in one-letter code: Muscleblind-like protein 3 (354 aa).

4 consecutive C3H1-type zinc fingers follow at residues 14-42 (WLTLEVCREFQRGTCSRADADCKFAHPPR), 48-74 (NGRVVACFDSLKGRCTRENCKYLHPPP), 174-202 (SDKLEVCREFQRGNCTRGENDCRYAHPTD), and 210-236 (DNTVTICMDYIKGRCSREKCKYFHPPA).

Belongs to the muscleblind family. In terms of tissue distribution, highly expressed in the placenta.

Its subcellular location is the nucleus. It is found in the cytoplasm. Mediates pre-mRNA alternative splicing regulation. Acts either as activator or repressor of splicing on specific pre-mRNA targets. Inhibits cardiac troponin-T (TNNT2) pre-mRNA exon inclusion but induces insulin receptor (IR) pre-mRNA exon inclusion in muscle. Antagonizes the alternative splicing activity pattern of CELF proteins. May play a role in myotonic dystrophy pathophysiology (DM). Could inhibit terminal muscle differentiation, acting at approximately the time of myogenin induction. The protein is Muscleblind-like protein 3 (MBNL3) of Homo sapiens (Human).